Consider the following 788-residue polypeptide: Cadherin-10 (788 aa).

The signal sequence occupies residues 1-22 (MTIYQFLRLFVLWACLPHFCCP). Positions 23–54 (ELTFRRTPGIQQMTAESRAPRSDGKILHRQKR) are excised as a propeptide. Topologically, residues 23–613 (ELTFRRTPGI…LLPAGLSTGA (591 aa)) are extracellular. Cadherin domains follow at residues 56 to 160 (WMWN…EPTF), 161 to 269 (PEEI…PPRF), 270 to 384 (PQNT…PPVF), 385 to 489 (SRSS…APQF), and 489 to 603 (FAVF…AEAL). Asn256 carries N-linked (GlcNAc...) asparagine glycosylation. 2 N-linked (GlcNAc...) asparagine glycosylation sites follow: Asn456 and Asn534. Residues 614-634 (LIAILLCIIILLVIVVLFAAL) traverse the membrane as a helical segment. At 635–788 (KRQRKKEPLI…YGGGESDKDA (154 aa)) the chain is on the cytoplasmic side. The residue at position 784 (Ser784) is a Phosphoserine.

The protein localises to the cell membrane. In terms of biological role, cadherins are calcium-dependent cell adhesion proteins. They preferentially interact with themselves in a homophilic manner in connecting cells; cadherins may thus contribute to the sorting of heterogeneous cell types. In Mus musculus (Mouse), this protein is Cadherin-10 (Cdh10).